A 156-amino-acid polypeptide reads, in one-letter code: ATP synthase subunit b (156 aa).

A helical membrane pass occupies residues 12–32; sequence VAFFIFVIFCMKFVWPPVIAA.

The protein belongs to the ATPase B chain family. F-type ATPases have 2 components, F(1) - the catalytic core - and F(0) - the membrane proton channel. F(1) has five subunits: alpha(3), beta(3), gamma(1), delta(1), epsilon(1). F(0) has three main subunits: a(1), b(2) and c(10-14). The alpha and beta chains form an alternating ring which encloses part of the gamma chain. F(1) is attached to F(0) by a central stalk formed by the gamma and epsilon chains, while a peripheral stalk is formed by the delta and b chains.

The protein localises to the cell inner membrane. Its function is as follows. F(1)F(0) ATP synthase produces ATP from ADP in the presence of a proton or sodium gradient. F-type ATPases consist of two structural domains, F(1) containing the extramembraneous catalytic core and F(0) containing the membrane proton channel, linked together by a central stalk and a peripheral stalk. During catalysis, ATP synthesis in the catalytic domain of F(1) is coupled via a rotary mechanism of the central stalk subunits to proton translocation. Functionally, component of the F(0) channel, it forms part of the peripheral stalk, linking F(1) to F(0). In Pseudomonas savastanoi pv. phaseolicola (strain 1448A / Race 6) (Pseudomonas syringae pv. phaseolicola (strain 1448A / Race 6)), this protein is ATP synthase subunit b.